The following is a 316-amino-acid chain: Arginine transport system permease protein ArgU (316 aa).

Residues 1-14 (MSDLNQGPGASTAQ) are compositionally biased toward polar residues. A disordered region spans residues 1–20 (MSDLNQGPGASTAQPKPIEA). 6 consecutive transmembrane segments (helical) span residues 29–49 (WVAAAIIVALLAWFIISALNN), 74–94 (IALTLLSMILGVVLGAILAVM), 108–128 (LYLWIFRGTPIYVQLVFWGLL), 151–171 (MFLLAVIGLGLNEAAYMAEIV), 217–237 (LISMLKTTSLVVAIPYSLELY), and 251–271 (VPMLLVAASWYLVITSILMVG). An ABC transmembrane type-1 domain is found at 70–274 (ALHTIALTLL…TSILMVGQYY (205 aa)).

The protein belongs to the binding-protein-dependent transport system permease family. In terms of assembly, the complex is probably composed of two ATP-binding proteins (ArgV), two transmembrane proteins (ArgU) and a solute-binding protein (ArgT).

Its subcellular location is the cell membrane. In terms of biological role, part of the ABC transporter complex ArgTUV involved in L-arginine import. May also transport L-citrulline. Probably responsible for the translocation of the substrate across the membrane. In Corynebacterium glutamicum (strain ATCC 13032 / DSM 20300 / JCM 1318 / BCRC 11384 / CCUG 27702 / LMG 3730 / NBRC 12168 / NCIMB 10025 / NRRL B-2784 / 534), this protein is Arginine transport system permease protein ArgU.